Reading from the N-terminus, the 232-residue chain is Succinyl-CoA:3-ketoacid coenzyme A transferase subunit A (232 aa).

24–30 lines the CoA pocket; sequence GGFGLCG.

The protein belongs to the 3-oxoacid CoA-transferase subunit A family. As to quaternary structure, heterodimer of a subunit A and a subunit B.

It catalyses the reaction a 3-oxo acid + succinyl-CoA = a 3-oxoacyl-CoA + succinate. The chain is Succinyl-CoA:3-ketoacid coenzyme A transferase subunit A (scoA) from Helicobacter pylori (strain J99 / ATCC 700824) (Campylobacter pylori J99).